Reading from the N-terminus, the 106-residue chain is Putative defensin-like protein 224 (106 aa).

The signal sequence occupies residues 1 to 23 (MKTLSLFFTLVILISSCVSNLMA). 3 disulfide bridges follow: Cys-60–Cys-78, Cys-64–Cys-84, and Cys-68–Cys-86.

The protein belongs to the DEFL family.

Its subcellular location is the secreted. The sequence is that of Putative defensin-like protein 224 from Arabidopsis thaliana (Mouse-ear cress).